A 243-amino-acid chain; its full sequence is Tyrosine recombinase XerD-like (243 aa).

One can recognise a Core-binding (CB) domain in the interval 1–72 (MKEYIRPFLN…AVNQFLYFLY (72 aa)). One can recognise a Tyr recombinase domain in the interval 85-243 (LPKVSVSKEQ…KTMITLEKYR (159 aa)). Catalysis depends on residues Lys149 and Arg210. Tyr242 serves as the catalytic O-(3'-phospho-DNA)-tyrosine intermediate.

Belongs to the 'phage' integrase family. XerD-like subfamily.

It localises to the cytoplasm. Functionally, putative tyrosine recombinase. Not involved in the cutting and rejoining of the recombining DNA molecules on dif(SL) site. This is Tyrosine recombinase XerD-like from Streptococcus sanguinis (strain SK36).